The chain runs to 122 residues: Proximal tubules-expressed gene protein (122 aa).

Residues Trp-33 to Ala-53 traverse the membrane as a helical segment.

This sequence belongs to the PDZK1-interacting protein 1/SMIM24 family. In terms of tissue distribution, expressed in prospective pronephric mesoderm at the late gastrula stage. After neurulation, expressed in the intermediate mesoderm, eye placode and blood islands. Expression becomes restricted to the pronephric proximal tubule during embryogenesis, but is absent from the connecting tubules.

Its subcellular location is the membrane. Essential for pronephric tubule development, acting upstream of pax8 and lhx1/lim1 and downstream of retinoic acid signaling to induce pronephric mesoderm to form pronephric tubule-specific cells. This is Proximal tubules-expressed gene protein (pteg) from Xenopus laevis (African clawed frog).